A 101-amino-acid chain; its full sequence is Pro-corazonin (101 aa).

The first 16 residues, 1-16, serve as a signal peptide directing secretion; the sequence is MLVLFVLSLVVSCALC. An Asparagine amide modification is found at Asn-27. A propeptide spanning residues 31-101 is cleaved from the precursor; it reads SNFPAEISAL…REKAPNNDNY (71 aa).

Belongs to the corazonin family. As to expression, expressed in central brain and the retrocerebral complex but not in antennal lobes, optic lobes or in gnathal, thoracic and abdominal ganglia (at protein level).

Its subcellular location is the secreted. Functionally, cardioactive peptide. Corazonin is probably involved in the physiological regulation of the heart beat. The chain is Pro-corazonin from Camponotus floridanus (Florida carpenter ant).